A 370-amino-acid polypeptide reads, in one-letter code: ADP-ribosylhydrolase ARH3 (370 aa).

3 residues coordinate Mg(2+): Glu35, Asp66, and Asp67. Residue Asp66 coordinates substrate. Substrate-binding positions include 135–141 (RGSFGNG), His171, Leu225, and Ile261. The Mg(2+) site is built by Asp304, Asp306, and Thr307.

The protein belongs to the ADP-ribosylglycohydrolase family. In terms of assembly, monomer. Requires Mg(2+) as cofactor.

The protein localises to the nucleus. It localises to the cytoplasm. It is found in the chromosome. Its subcellular location is the mitochondrion matrix. It carries out the reaction [(1''-&gt;2')-ADP-alpha-D-ribose](n) + H2O = [(1''-&gt;2')-ADP-alpha-D-ribose](n-1) + ADP-D-ribose. The enzyme catalyses 1''-O-acetyl-ADP-alpha-D-ribose + H2O = ADP-D-ribose + acetate + H(+). The catalysed reaction is O-(ADP-D-ribosyl)-L-seryl-[protein] + H2O = ADP-D-ribose + L-seryl-[protein]. It catalyses the reaction alpha-NAD(+) + H2O = ADP-D-ribose + nicotinamide + H(+). The protein undergoes a dramatic conformational switch from closed to open states upon substrate-binding, which enables specific substrate recognition for the 1''-O-linkage. The glutamate flap (Glu-35) blocks substrate entrance to Mg(2+) in the unliganded closed state. In presence of substrate, Glu-35 is ejected from the active site: this closed-to-open transition significantly widens the substrate-binding channel and precisely positions the scissile 1''-O-linkage for cleavage while securing tightly 2'- and 3'-hydroxyls of ADP-ribose. Its function is as follows. ADP-ribosylhydrolase that preferentially hydrolyzes the scissile alpha-O-linkage attached to the anomeric C1'' position of ADP-ribose and acts on different substrates, such as proteins ADP-ribosylated on serine and threonine, free poly(ADP-ribose) and O-acetyl-ADP-D-ribose. Specifically acts as a serine mono-ADP-ribosylhydrolase by mediating the removal of mono-ADP-ribose attached to serine residues on proteins, thereby playing a key role in DNA damage response. Serine ADP-ribosylation of proteins constitutes the primary form of ADP-ribosylation of proteins in response to DNA damage. Does not hydrolyze ADP-ribosyl-arginine, -cysteine, -diphthamide, or -asparagine bonds. Also able to degrade protein free poly(ADP-ribose), which is synthesized in response to DNA damage: free poly(ADP-ribose) acts as a potent cell death signal and its degradation by ADPRHL2 protects cells from poly(ADP-ribose)-dependent cell death, a process named parthanatos. Also hydrolyzes free poly(ADP-ribose) in mitochondria. Specifically digests O-acetyl-ADP-D-ribose, a product of deacetylation reactions catalyzed by sirtuins. Specifically degrades 1''-O-acetyl-ADP-D-ribose isomer, rather than 2''-O-acetyl-ADP-D-ribose or 3''-O-acetyl-ADP-D-ribose isomers. This is ADP-ribosylhydrolase ARH3 (adprs) from Danio rerio (Zebrafish).